The chain runs to 261 residues: Thiazole synthase (261 aa).

The active-site Schiff-base intermediate with DXP is K95. Residues G156, 182 to 183, and 204 to 205 each bind 1-deoxy-D-xylulose 5-phosphate; these read AG and NT.

Belongs to the ThiG family. In terms of assembly, homotetramer. Forms heterodimers with either ThiH or ThiS.

It is found in the cytoplasm. The enzyme catalyses [ThiS sulfur-carrier protein]-C-terminal-Gly-aminoethanethioate + 2-iminoacetate + 1-deoxy-D-xylulose 5-phosphate = [ThiS sulfur-carrier protein]-C-terminal Gly-Gly + 2-[(2R,5Z)-2-carboxy-4-methylthiazol-5(2H)-ylidene]ethyl phosphate + 2 H2O + H(+). It participates in cofactor biosynthesis; thiamine diphosphate biosynthesis. Its function is as follows. Catalyzes the rearrangement of 1-deoxy-D-xylulose 5-phosphate (DXP) to produce the thiazole phosphate moiety of thiamine. Sulfur is provided by the thiocarboxylate moiety of the carrier protein ThiS. In vitro, sulfur can be provided by H(2)S. This chain is Thiazole synthase, found in Pectobacterium carotovorum subsp. carotovorum (strain PC1).